The chain runs to 328 residues: Phosphate acyltransferase (328 aa).

Belongs to the PlsX family. As to quaternary structure, homodimer. Probably interacts with PlsY.

The protein localises to the cytoplasm. It carries out the reaction a fatty acyl-[ACP] + phosphate = an acyl phosphate + holo-[ACP]. It participates in lipid metabolism; phospholipid metabolism. In terms of biological role, catalyzes the reversible formation of acyl-phosphate (acyl-PO(4)) from acyl-[acyl-carrier-protein] (acyl-ACP). This enzyme utilizes acyl-ACP as fatty acyl donor, but not acyl-CoA. This is Phosphate acyltransferase from Staphylococcus aureus (strain Mu3 / ATCC 700698).